The sequence spans 160 residues: RTX-II toxin-activating lysine-acyltransferase ApxIIC (160 aa).

Residues His23 and Asp92 contribute to the active site.

Belongs to the RTX toxin acyltransferase family. Homodimer.

The protein resides in the cytoplasm. The catalysed reaction is a fatty acyl-[ACP] + L-lysyl-[protein] = N(6)-(fatty acyl)-L-lysyl-[protein] + holo-[ACP] + H(+). In terms of biological role, protein-lysine acyltransferase that catalyzes fatty acylation of the protoxin, thereby converting it to the active toxin. This Actinobacillus pleuropneumoniae (Haemophilus pleuropneumoniae) protein is RTX-II toxin-activating lysine-acyltransferase ApxIIC (apxIIC).